Reading from the N-terminus, the 239-residue chain is Cytochrome c oxidase subunit 2 (239 aa).

Over 1-26 (MATPAQLGLMDAASPVMEEMIYFHDH) the chain is Mitochondrial intermembrane. Residues 27–48 (VMLVLILITCLIFYSMLVLISS) form a helical membrane-spanning segment. Residues 49 to 62 (KYIYRFLTDGHVIE) lie on the Mitochondrial matrix side of the membrane. The chain crosses the membrane as a helical span at residues 63–82 (TVWTVIPAIILVVVALPSLK). The Mitochondrial intermembrane segment spans residues 83-239 (LLYLTDELDN…ESLGSLNMKR (157 aa)). Cu cation is bound by residues H161, C196, E198, C200, H204, and M207. Residue E198 coordinates Mg(2+).

Belongs to the cytochrome c oxidase subunit 2 family. As to quaternary structure, component of the cytochrome c oxidase (complex IV, CIV), a multisubunit enzyme composed of a catalytic core of 3 subunits and several supernumerary subunits. The complex exists as a monomer or a dimer and forms supercomplexes (SCs) in the inner mitochondrial membrane with ubiquinol-cytochrome c oxidoreductase (cytochrome b-c1 complex, complex III, CIII). Cu cation is required as a cofactor.

Its subcellular location is the mitochondrion inner membrane. The enzyme catalyses 4 Fe(II)-[cytochrome c] + O2 + 8 H(+)(in) = 4 Fe(III)-[cytochrome c] + 2 H2O + 4 H(+)(out). Its function is as follows. Component of the cytochrome c oxidase, the last enzyme in the mitochondrial electron transport chain which drives oxidative phosphorylation. The respiratory chain contains 3 multisubunit complexes succinate dehydrogenase (complex II, CII), ubiquinol-cytochrome c oxidoreductase (cytochrome b-c1 complex, complex III, CIII) and cytochrome c oxidase (complex IV, CIV), that cooperate to transfer electrons derived from NADH and succinate to molecular oxygen, creating an electrochemical gradient over the inner membrane that drives transmembrane transport and the ATP synthase. Cytochrome c oxidase is the component of the respiratory chain that catalyzes the reduction of oxygen to water. Electrons originating from reduced cytochrome c in the intermembrane space (IMS) are transferred via the dinuclear copper A center (CU(A)) of subunit 2 and heme A of subunit 1 to the active site in subunit 1, a binuclear center (BNC) formed by heme A3 and copper B (CU(B)). The BNC reduces molecular oxygen to 2 water molecules using 4 electrons from cytochrome c in the IMS and 4 protons from the mitochondrial matrix. The protein is Cytochrome c oxidase subunit 2 (COII) of Branchiostoma lanceolatum (Common lancelet).